The following is a 433-amino-acid chain: Probable RNA 3'-terminal phosphate cyclase (433 aa).

A compositionally biased stretch (low complexity) spans 1 to 10; the sequence is MGKNKNYNKN. Residues 1-28 form a disordered region; it reads MGKNKNYNKNQFKKSKTNNDTTVAQQQQ. A compositionally biased stretch (polar residues) spans 18-28; it reads NNDTTVAQQQQ. ATP-binding positions include Gln137 and 328–332; that span reads YLQDQ. His354 functions as the Tele-AMP-histidine intermediate in the catalytic mechanism. Residues 400–433 form a disordered region; the sequence is LNNNNNNSNSNTTTTTTTTTISTTTIDNQNSEEK. Residues 401 to 425 show a composition bias toward low complexity; it reads NNNNNNSNSNTTTTTTTTTISTTTI.

This sequence belongs to the RNA 3'-terminal cyclase family. Type 1 subfamily.

Its subcellular location is the nucleus. The protein localises to the nucleoplasm. It catalyses the reaction a 3'-end 3'-phospho-ribonucleotide-RNA + ATP = a 3'-end 2',3'-cyclophospho-ribonucleotide-RNA + AMP + diphosphate. In terms of biological role, catalyzes the conversion of 3'-phosphate to a 2',3'-cyclic phosphodiester at the end of RNA. The mechanism of action of the enzyme occurs in 3 steps: (A) adenylation of the enzyme by ATP; (B) transfer of adenylate to an RNA-N3'P to produce RNA-N3'PP5'A; (C) and attack of the adjacent 2'-hydroxyl on the 3'-phosphorus in the diester linkage to produce the cyclic end product. The biological role of this enzyme is unknown but it is likely to function in some aspects of cellular RNA processing. The polypeptide is Probable RNA 3'-terminal phosphate cyclase (rtca) (Dictyostelium discoideum (Social amoeba)).